The sequence spans 240 residues: Glutathione S-transferase theta-1 (240 aa).

In terms of domain architecture, GST N-terminal spans 2 to 82; that stretch reads GLELYLDLLS…YLARKYKVPD (81 aa). Residues H40, 53–54, and 66–67 contribute to the glutathione site; these read KV and ES. Positions 88–226 constitute a GST C-terminal domain; it reads DLQACARVDE…AKDSQPADPT (139 aa).

It belongs to the GST superfamily. Theta family. As to quaternary structure, homodimer.

The protein localises to the cytoplasm. The catalysed reaction is RX + glutathione = an S-substituted glutathione + a halide anion + H(+). Functionally, conjugation of reduced glutathione to a wide number of exogenous and endogenous hydrophobic electrophiles. Also binds steroids, bilirubin, carcinogens and numerous organic anions. Has dichloromethane dehalogenase activity. This is Glutathione S-transferase theta-1 (GSTT1) from Bos taurus (Bovine).